We begin with the raw amino-acid sequence, 512 residues long: Peroxisomal N(1)-acetyl-spermine/spermidine oxidase (512 aa).

The residue at position 1 (methionine 1) is an N-acetylmethionine. The propeptide occupies 1 to 6 (MQSGGR). FAD-binding positions include alanine 25, glutamate 46, arginine 54, and 70-71 (HW). Positions 73 and 195 each coordinate substrate. Valine 248 is an FAD binding site. Asparagine 321 serves as a coordination point for substrate. FAD-binding positions include glutamate 473 and 482–483 (TT). The Microbody targeting signal signature appears at 510-512 (PRL).

This sequence belongs to the flavin monoamine oxidase family. In terms of assembly, monomer. FAD serves as cofactor.

It localises to the peroxisome. The protein localises to the cytoplasm. It carries out the reaction N(1)-acetylspermine + O2 + H2O = 3-acetamidopropanal + spermidine + H2O2. It catalyses the reaction N(1)-acetylspermidine + O2 + H2O = 3-acetamidopropanal + putrescine + H2O2. The enzyme catalyses N(1),N(12)-diacetylspermine + O2 + H2O = 3-acetamidopropanal + N(1)-acetylspermidine + H2O2. It functions in the pathway amine and polyamine metabolism; spermine metabolism. In terms of biological role, flavoenzyme which catalyzes the oxidation of N(1)-acetylspermine to spermidine and is thus involved in the polyamine back-conversion. Can also oxidize N(1)-acetylspermidine to putrescine. Substrate specificity: N(1)-acetylspermine = N(1)-acetylspermidine &gt; N(1),N(12)-diacylspermine &gt;&gt; spermine. Does not oxidize spermidine. Plays an important role in the regulation of polyamine intracellular concentration. The protein is Peroxisomal N(1)-acetyl-spermine/spermidine oxidase (PAOX) of Bos taurus (Bovine).